The primary structure comprises 266 residues: Putative pyruvate, phosphate dikinase regulatory protein (266 aa).

G147–T154 provides a ligand contact to ADP.

Belongs to the pyruvate, phosphate/water dikinase regulatory protein family. PDRP subfamily.

The enzyme catalyses N(tele)-phospho-L-histidyl/L-threonyl-[pyruvate, phosphate dikinase] + ADP = N(tele)-phospho-L-histidyl/O-phospho-L-threonyl-[pyruvate, phosphate dikinase] + AMP + H(+). It catalyses the reaction N(tele)-phospho-L-histidyl/O-phospho-L-threonyl-[pyruvate, phosphate dikinase] + phosphate + H(+) = N(tele)-phospho-L-histidyl/L-threonyl-[pyruvate, phosphate dikinase] + diphosphate. In terms of biological role, bifunctional serine/threonine kinase and phosphorylase involved in the regulation of the pyruvate, phosphate dikinase (PPDK) by catalyzing its phosphorylation/dephosphorylation. This is Putative pyruvate, phosphate dikinase regulatory protein from Clostridium perfringens (strain SM101 / Type A).